A 629-amino-acid chain; its full sequence is RNA polymerase sigma factor RpoD (629 aa).

The tract at residues 183–228 (HNGLDEDFSDEDDEEESSNADVEDNEDEEDNESESTSDSSDSDNSI) is disordered. A compositionally biased stretch (acidic residues) spans 187–228 (DEDFSDEDDEEESSNADVEDNEDEEDNESESTSDSSDSDNSI). A sigma-70 factor domain-2 region spans residues 395-465 (MVEANLRLVI…TRSIADQART (71 aa)). An Interaction with polymerase core subunit RpoC motif is present at residues 419–422 (DLIQ). The sigma-70 factor domain-3 stretch occupies residues 474 to 550 (ETINKLNRIS…DSTLELPLDS (77 aa)). Residues 563–616 (VLEGLTPREAKVLRMRFGIDMNTDHTLEEVGKQFDVTRERIRQIEAKALRKLRH) form a sigma-70 factor domain-4 region. Positions 589 to 608 (LEEVGKQFDVTRERIRQIEA) form a DNA-binding region, H-T-H motif.

It belongs to the sigma-70 factor family. RpoD/SigA subfamily. As to quaternary structure, interacts transiently with the RNA polymerase catalytic core.

The protein resides in the cytoplasm. In terms of biological role, sigma factors are initiation factors that promote the attachment of RNA polymerase to specific initiation sites and are then released. This sigma factor is the primary sigma factor during exponential growth. This Haemophilus influenzae (strain ATCC 51907 / DSM 11121 / KW20 / Rd) protein is RNA polymerase sigma factor RpoD.